The primary structure comprises 216 residues: Neural cell adhesion molecule L1.2 (216 aa).

Residues 1 to 64 (EFFIHYLRKD…QTAGARVMEV (64 aa)) enclose the Fibronectin type-III domain. Over 1 to 73 (EFFIHYLRKD…VKSGFVTESW (73 aa)) the chain is Extracellular. 2 N-linked (GlcNAc...) asparagine glycosylation sites follow: N22 and N46. Residues 74-94 (FIGLISALVLLLLVLLILCFI) traverse the membrane as a helical segment. At 95–216 (KRSKGGKYSV…GLPNSAALLD (122 aa)) the chain is on the cytoplasmic side. 2 disordered regions span residues 127 to 149 (YRSL…CEDS) and 173 to 216 (DESL…ALLD). Basic and acidic residues predominate over residues 128-139 (RSLESDNEEKRT).

It belongs to the immunoglobulin superfamily. L1/neurofascin/NgCAM family. Expressed in many postmitotic neurons in 16-36 hours embryos. Little or no expression in the olfactory placode, the anterior lateral line/acoustic ganglia complex, the posterior lateral line ganglion, late-developing hindbrain neurons and some Rohon-Beard cells in the spinal cord.

Its subcellular location is the cell membrane. It localises to the cell projection. The protein resides in the growth cone. In terms of biological role, cell adhesion molecule with an important role in the development of the nervous system. Involved in neuron-neuron adhesion, neurite fasciculation, outgrowth of neurites, etc. Binds to axonin on neurons. In Danio rerio (Zebrafish), this protein is Neural cell adhesion molecule L1.2 (nadl1.2).